Consider the following 531-residue polypeptide: Retinoid isomerohydrolase (531 aa).

A lipid anchor (S-palmitoyl cysteine; in membrane form) is attached at Cys-112. Fe cation-binding residues include His-180, His-241, and His-313. Cys-329 carries S-palmitoyl cysteine; in membrane form lipidation. Fe cation is bound at residue His-526.

Belongs to the carotenoid oxygenase family. The cofactor is Fe(2+). Palmitoylated. In terms of tissue distribution, retinal pigment epithelium-specific.

It is found in the cytoplasm. It localises to the cell membrane. It catalyses the reaction an all-trans-retinyl ester + H2O = 11-cis-retinol + a fatty acid + H(+). The catalysed reaction is lutein = (3R,3'S)-zeaxanthin. The enzyme catalyses all-trans-retinyl hexadecanoate + H2O = 11-cis-retinol + hexadecanoate + H(+). Functionally, plays important roles in the production of 11-cis retinal and in visual pigment regeneration. Capable of catalyzing the isomerization of lutein to meso-zeaxanthin an eye-specific carotenoid. This chain is Retinoid isomerohydrolase (rpe65a), found in Danio rerio (Zebrafish).